The following is a 650-amino-acid chain: Vitrin (650 aa).

An N-terminal signal peptide occupies residues 1 to 26 (MGIVVPTMKASVIEVLLVLLVTGIHS). An LCCL domain is found at 40–133 (TVPQINCDVK…LSLPRWRESF (94 aa)). Disulfide bonds link cysteine 46–cysteine 62 and cysteine 66–cysteine 86. The tract at residues 198-226 (RSTSKPFAASVTNSPRPQPVGHRSQEMEE) is disordered. 2 VWFA domains span residues 265–450 (DLSF…VKRV) and 467–640 (DIGF…IQNI). Asparagine 492 carries N-linked (GlcNAc...) asparagine glycosylation.

As to quaternary structure, binds dermatan sulfate and chondroitin sulfate.

The protein resides in the secreted. It is found in the extracellular space. Its subcellular location is the extracellular matrix. Functionally, promotes matrix assembly and cell adhesiveness. Plays a role in spinal cord formation by regulating the proliferation and differentiation of neural stem cells. This is Vitrin (Vit) from Mus musculus (Mouse).